The following is a 378-amino-acid chain: S-adenosylmethionine:tRNA ribosyltransferase-isomerase (378 aa).

Belongs to the QueA family. In terms of assembly, monomer.

It is found in the cytoplasm. The enzyme catalyses 7-aminomethyl-7-carbaguanosine(34) in tRNA + S-adenosyl-L-methionine = epoxyqueuosine(34) in tRNA + adenine + L-methionine + 2 H(+). The protein operates within tRNA modification; tRNA-queuosine biosynthesis. Functionally, transfers and isomerizes the ribose moiety from AdoMet to the 7-aminomethyl group of 7-deazaguanine (preQ1-tRNA) to give epoxyqueuosine (oQ-tRNA). The chain is S-adenosylmethionine:tRNA ribosyltransferase-isomerase from Prochlorococcus marinus (strain MIT 9312).